We begin with the raw amino-acid sequence, 258 residues long: GTP cyclohydrolase FolE2 (258 aa).

Belongs to the GTP cyclohydrolase IV family.

It carries out the reaction GTP + H2O = 7,8-dihydroneopterin 3'-triphosphate + formate + H(+). Its pathway is cofactor biosynthesis; 7,8-dihydroneopterin triphosphate biosynthesis; 7,8-dihydroneopterin triphosphate from GTP: step 1/1. In terms of biological role, converts GTP to 7,8-dihydroneopterin triphosphate. In Lawsonia intracellularis (strain PHE/MN1-00), this protein is GTP cyclohydrolase FolE2.